The primary structure comprises 370 residues: Phosphoserine aminotransferase (370 aa).

N-acetylmethionine is present on Met-1. Positions 44 and 45 each coordinate O-phospho-L-serine. The residue at position 51 (Lys-51) is an N6-acetyllysine. 3 residues coordinate pyridoxal 5'-phosphate: Gly-79, Cys-80, and Trp-107. Lys-127 carries the N6-acetyllysine modification. Pyridoxal 5'-phosphate is bound by residues Thr-156, Asp-176, and Gln-199. Residue Lys-200 is modified to N6-(pyridoxal phosphate)lysine. 2 residues coordinate pyridoxal 5'-phosphate: Asn-241 and Thr-242. N6-acetyllysine occurs at positions 269, 318, and 323. Ser-331 carries the phosphoserine modification. N6-acetyllysine is present on Lys-333. O-phospho-L-serine is bound by residues His-335, Arg-336, and Arg-342.

The protein belongs to the class-V pyridoxal-phosphate-dependent aminotransferase family. SerC subfamily. Homodimer. Requires pyridoxal 5'-phosphate as cofactor.

It catalyses the reaction O-phospho-L-serine + 2-oxoglutarate = 3-phosphooxypyruvate + L-glutamate. It participates in amino-acid biosynthesis; L-serine biosynthesis; L-serine from 3-phospho-D-glycerate: step 2/3. In terms of biological role, involved in L-serine biosynthesis via the phosphorylated pathway, a three-step pathway converting the glycolytic intermediate 3-phospho-D-glycerate into L-serine. Catalyzes the second step, that is the pyridoxal 5'-phosphate-dependent transamination of 3-phosphohydroxypyruvate and L-glutamate to O-phosphoserine (OPS) and alpha-ketoglutarate. The polypeptide is Phosphoserine aminotransferase (PSAT1) (Oryctolagus cuniculus (Rabbit)).